A 520-amino-acid polypeptide reads, in one-letter code: NAD(P)H-quinone oxidoreductase subunit 2 (520 aa).

A run of 14 helical transmembrane segments spans residues 15-35 (ILPE…DLIL), 42-62 (WIGY…YFQW), 79-99 (LSII…LMSI), 106-126 (GTAL…GMFV), 132-152 (LVMI…LTGY), 167-187 (LLIG…LYGL), 210-230 (LGAV…ISAA), 244-264 (PTPV…ALAI), 280-300 (FVFT…ALAQ), 306-326 (MLAY…IAGT), 334-354 (IFYL…IILF), 378-398 (LGLS…GFFG), 400-420 (IYLF…LGLV), and 466-486 (VGLV…NPLF).

Belongs to the complex I subunit 2 family. As to quaternary structure, NDH-1 can be composed of about 15 different subunits; different subcomplexes with different compositions have been identified which probably have different functions.

The protein localises to the cellular thylakoid membrane. The catalysed reaction is a plastoquinone + NADH + (n+1) H(+)(in) = a plastoquinol + NAD(+) + n H(+)(out). The enzyme catalyses a plastoquinone + NADPH + (n+1) H(+)(in) = a plastoquinol + NADP(+) + n H(+)(out). NDH-1 shuttles electrons from an unknown electron donor, via FMN and iron-sulfur (Fe-S) centers, to quinones in the respiratory and/or the photosynthetic chain. The immediate electron acceptor for the enzyme in this species is believed to be plastoquinone. Couples the redox reaction to proton translocation, and thus conserves the redox energy in a proton gradient. Cyanobacterial NDH-1 also plays a role in inorganic carbon-concentration. The sequence is that of NAD(P)H-quinone oxidoreductase subunit 2 from Nostoc sp. (strain PCC 7120 / SAG 25.82 / UTEX 2576).